The chain runs to 558 residues: Phosphatidylserine lipase ABHD16A (558 aa).

2 consecutive transmembrane segments (helical) span residues 60–80 (ILAL…FAFF) and 93–113 (VVPF…VACL). Over 114 to 558 (RGIGRWTNPQ…AQNFQMPWHL (445 aa)) the chain is Cytoplasmic. The region spanning 281-407 (LVICCEGNAG…LVTRTVRQHL (127 aa)) is the AB hydrolase-1 domain. Active-site charge relay system residues include Ser355, Asp430, and His507.

Belongs to the AB hydrolase superfamily. ABHD16 family.

It is found in the membrane. The catalysed reaction is 1-heptadecanoyl-2-(5Z,8Z,11Z,14Z-eicosatetraenoyl)-sn-glycero-3-phosphoserine + H2O = 1-heptadecanoyl-sn-glycero-3-phosphoserine + (5Z,8Z,11Z,14Z)-eicosatetraenoate + H(+). It catalyses the reaction 1-hexadecanoyl-2-(9Z-octadecenoyl)-sn-glycero-3-phospho-L-serine + H2O = 1-hexadecanoyl-sn-glycero-3-phospho-L-serine + (9Z)-octadecenoate + H(+). It carries out the reaction 1-octadecanoyl-2-(9Z,12Z-octadecadienoyl)-sn-glycero-3-phosphoserine + H2O = 1-octadecanoyl-sn-glycero-3-phosphoserine + (9Z,12Z)-octadecadienoate + H(+). The enzyme catalyses 1-heptadecanoyl-2-(5Z,8Z,11Z,14Z-eicosatetraenoyl)-sn-glycero-3-phosphocholine + H2O = 1-heptadecanoyl-sn-glycero-3-phosphocholine + (5Z,8Z,11Z,14Z)-eicosatetraenoate + H(+). The catalysed reaction is 1-hexadecanoyl-2-(9Z-octadecenoyl)-sn-glycero-3-phosphoglycerol + H2O = 1-hexadecanoyl-sn-glycero-3-phosphoglycerol + (9Z)-octadecenoate + H(+). It catalyses the reaction 1-hexadecanoyl-2-(9Z-octadecenoyl)-sn-glycero-3-phospho-(1D-myo-inositol) + H2O = 1-hexadecanoyl-sn-glycero-3-phospho-(1D-myo-inositol) + (9Z)-octadecenoate + H(+). It carries out the reaction 1-heptadecanoyl-2-(5Z,8Z,11Z,14Z-eicosatetraenoyl)-sn-glycero-3-phosphoethanolamine + H2O = 1-heptadecanoyl-sn-glycero-3-phosphoethanolamine + (5Z,8Z,11Z,14Z)-eicosatetraenoate + H(+). The enzyme catalyses 1-hexadecanoyl-2-(9Z-octadecenoyl)-sn-glycero-3-phospho-(1'-sn-glycerol) + H2O = 1-hexadecanoyl-sn-glycero-3-phospho-(1'-sn-glycerol) + (9Z)-octadecenoate + H(+). The catalysed reaction is Hydrolyzes glycerol monoesters of long-chain fatty acids.. It catalyses the reaction 1-tetradecanoylglycerol + H2O = tetradecanoate + glycerol + H(+). It carries out the reaction 2-hexadecanoylglycerol + H2O = glycerol + hexadecanoate + H(+). The enzyme catalyses 1-(9Z-octadecenoyl)-glycerol + H2O = glycerol + (9Z)-octadecenoate + H(+). The catalysed reaction is 2-(9Z-octadecenoyl)-glycerol + H2O = glycerol + (9Z)-octadecenoate + H(+). It catalyses the reaction 2-(9Z,12Z-octadecadienoyl)-glycerol + H2O = (9Z,12Z)-octadecadienoate + glycerol + H(+). It carries out the reaction 1-(5Z,8Z,11Z,14Z-eicosatetraenoyl)-glycerol + H2O = glycerol + (5Z,8Z,11Z,14Z)-eicosatetraenoate + H(+). The enzyme catalyses 2-(5Z,8Z,11Z,14Z-eicosatetraenoyl)-glycerol + H2O = glycerol + (5Z,8Z,11Z,14Z)-eicosatetraenoate + H(+). The catalysed reaction is prostaglandin D2-1-glycerol ester + H2O = prostaglandin D2 + glycerol + H(+). It catalyses the reaction 2-glyceryl-15-deoxy-Delta(12,14)-prostaglandin J2 + H2O = 15-deoxy-Delta(12,14)-prostaglandin J2 + glycerol + H(+). It carries out the reaction 1-(9Z,12Z-octadecadienoyl)-glycerol + H2O = (9Z,12Z)-octadecadienoate + glycerol + H(+). Functionally, phosphatidylserine (PS) lipase that mediates the hydrolysis of phosphatidylserine to generate lysophosphatidylserine (LPS). LPS constitutes a class of signaling lipids that regulates immunological and neurological processes. Has no activity towards diacylglycerol, triacylglycerol or lysophosphatidylserine lipase. Also has monoacylglycerol lipase activity, with preference for 1-(9Z,12Z-octadecadienoyl)-glycerol (1-LG) and 2-glyceryl-15-deoxy-Delta(12,14)-prostaglandin J2 (15d-PGJ(2)-G). This Macaca fascicularis (Crab-eating macaque) protein is Phosphatidylserine lipase ABHD16A.